We begin with the raw amino-acid sequence, 88 residues long: MPKRVLQGVVVSDKTDKTIVVKVERRFTHPVMKKTVRRSKNYHAHDEANAAKIGQTVFIEESRPYSKTKTWKLVEDQAAAAEAAGTAA.

This sequence belongs to the universal ribosomal protein uS17 family. Part of the 30S ribosomal subunit.

Functionally, one of the primary rRNA binding proteins, it binds specifically to the 5'-end of 16S ribosomal RNA. The chain is Small ribosomal subunit protein uS17 from Methylorubrum extorquens (strain PA1) (Methylobacterium extorquens).